Consider the following 111-residue polypeptide: uncharacterized protein (111 aa).

4 helical membrane-spanning segments follow: residues 4 to 21 (FITA…FVSF), 28 to 47 (LVYF…YMIY), 51 to 73 (TGIR…VTAF), and 80 to 102 (SFFF…YLGM).

It localises to the cell membrane. This is an uncharacterized protein from Bacillus subtilis (strain 168).